A 119-amino-acid polypeptide reads, in one-letter code: Secreted RxLR effector protein RXLR-C04 (119 aa).

The first 22 residues, Met1–Ala22, serve as a signal peptide directing secretion. The short motif at Arg40 to Val77 is the RxLR-dEER element. Asn46 carries N-linked (GlcNAc...) asparagine glycosylation.

Belongs to the RxLR effector family.

The protein localises to the secreted. The protein resides in the host cytoplasm. It is found in the host nucleus. Secreted effector that suppresses pattern-triggered immunity (PTI) in plant host. This chain is Secreted RxLR effector protein RXLR-C04, found in Plasmopara halstedii (Downy mildew of sunflower).